Here is a 240-residue protein sequence, read N- to C-terminus: MQYKLILLVVGLFQASLAYPYADGESVPHPSKDVAPPDTQDSSTQTEVTTQKGWIKQGVETITGMIKGQADIAKDAVGIAGTGTHMGAKITSAAGELGTGIGNAALQGGLQIGAMGVEAGANLAHQGIGLVDKWGQILPGFLGKGVQSVANLAGNIVDKAENIGKGVLEKVGAAGDKGFKWVDSKIKDTANSVDTTVNHITGKIQEGIDKGANTLTGGIDNTLGKLKDIVNNIRPKPVTA.

The signal sequence occupies residues 1–18; it reads MQYKLILLVVGLFQASLA. Positions 25 to 50 are disordered; sequence ESVPHPSKDVAPPDTQDSSTQTEVTT. A compositionally biased stretch (polar residues) spans 39 to 50; it reads TQDSSTQTEVTT.

As to expression, expressed by the venom gland (anterior main gland) (at protein level).

The protein localises to the secreted. The chain is Venom hemolysin-like protein 1 from Platymeris rhadamanthus (Red spot assassin bug).